A 212-amino-acid polypeptide reads, in one-letter code: 3-isopropylmalate dehydratase small subunit (212 aa).

This sequence belongs to the LeuD family. LeuD type 1 subfamily. As to quaternary structure, heterodimer of LeuC and LeuD.

The catalysed reaction is (2R,3S)-3-isopropylmalate = (2S)-2-isopropylmalate. The protein operates within amino-acid biosynthesis; L-leucine biosynthesis; L-leucine from 3-methyl-2-oxobutanoate: step 2/4. Functionally, catalyzes the isomerization between 2-isopropylmalate and 3-isopropylmalate, via the formation of 2-isopropylmaleate. The polypeptide is 3-isopropylmalate dehydratase small subunit (Pseudomonas aeruginosa (strain LESB58)).